A 241-amino-acid chain; its full sequence is Carboxy-S-adenosyl-L-methionine synthase 1 (241 aa).

S-adenosyl-L-methionine contacts are provided by residues Tyr37, 61-63, Asn131, and Arg198; that span reads GCS.

It belongs to the class I-like SAM-binding methyltransferase superfamily. Cx-SAM synthase family. Homodimer.

It catalyses the reaction prephenate + S-adenosyl-L-methionine = carboxy-S-adenosyl-L-methionine + 3-phenylpyruvate + H2O. Its function is as follows. Catalyzes the conversion of S-adenosyl-L-methionine (SAM) to carboxy-S-adenosyl-L-methionine (Cx-SAM). In Yersinia pseudotuberculosis serotype IB (strain PB1/+), this protein is Carboxy-S-adenosyl-L-methionine synthase 1.